Consider the following 275-residue polypeptide: uncharacterized protein (275 aa).

Residues 75–157 (AKELIKNRRL…AELKQAAEQG (83 aa)) adopt a coiled-coil conformation.

This is an uncharacterized protein from Bacillus subtilis (strain 168).